The following is a 285-amino-acid chain: UDP-3-O-acyl-N-acetylglucosamine deacetylase (285 aa).

Positions 89, 243, and 247 each coordinate Zn(2+). Catalysis depends on His-270, which acts as the Proton donor.

Belongs to the LpxC family. Zn(2+) serves as cofactor.

The catalysed reaction is a UDP-3-O-[(3R)-3-hydroxyacyl]-N-acetyl-alpha-D-glucosamine + H2O = a UDP-3-O-[(3R)-3-hydroxyacyl]-alpha-D-glucosamine + acetate. It participates in glycolipid biosynthesis; lipid IV(A) biosynthesis; lipid IV(A) from (3R)-3-hydroxytetradecanoyl-[acyl-carrier-protein] and UDP-N-acetyl-alpha-D-glucosamine: step 2/6. In terms of biological role, catalyzes the hydrolysis of UDP-3-O-myristoyl-N-acetylglucosamine to form UDP-3-O-myristoylglucosamine and acetate, the committed step in lipid A biosynthesis. In Thermosynechococcus vestitus (strain NIES-2133 / IAM M-273 / BP-1), this protein is UDP-3-O-acyl-N-acetylglucosamine deacetylase.